Here is a 292-residue protein sequence, read N- to C-terminus: Sulfofructosephosphate aldolase (292 aa).

Lysine 193 (schiff-base intermediate with substrate) is an active-site residue.

The protein belongs to the aldolase LacD family. Homotetramer.

It carries out the reaction 6-deoxy-6-sulfo-D-fructose 1-phosphate = (2S)-3-sulfolactaldehyde + dihydroxyacetone phosphate. Functionally, cleaves 6-deoxy-6-sulfo-D-fructose 1-phosphate (SFP) to form dihydroxyacetone phosphate (DHAP) and 3-sulfolactaldehyde (SLA). Can also catalyze the reverse reaction. The chain is Sulfofructosephosphate aldolase (yihT) from Salmonella typhimurium (strain LT2 / SGSC1412 / ATCC 700720).